The primary structure comprises 154 residues: Superoxide dismutase [Cu-Zn] (154 aa).

3 residues coordinate Cu cation: His-47, His-49, and His-64. The cysteines at positions 58 and 147 are disulfide-linked. Zn(2+) contacts are provided by His-64, His-72, His-81, and Asp-84. His-121 is a Cu cation binding site. Arg-144 is a binding site for substrate.

It belongs to the Cu-Zn superoxide dismutase family. In terms of assembly, homodimer. Cu cation serves as cofactor. It depends on Zn(2+) as a cofactor.

The protein localises to the cytoplasm. The catalysed reaction is 2 superoxide + 2 H(+) = H2O2 + O2. In terms of biological role, destroys radicals which are normally produced within the cells and which are toxic to biological systems. The chain is Superoxide dismutase [Cu-Zn] (SOD1) from Candida albicans (Yeast).